The primary structure comprises 610 residues: MLFARRLEQLKDLNRIRNFSIIAHIDHGKSTLADRFIQICGGLTEREMSSQVLDSMDIERERGITIKAQCVSLNYTAKDGKTYLLNFIDTPGHVDFSYEVSRSLAACEGAILVVDAAQGVEAQTLAVCYTAIDQSLTVLPVLNKIDLPQAEPERVISEIEDIIGLDAQDAIRVSAKSGLGVNDVLEALVANIPPPKGDVHAPLQALIIDSWFDSYLGVVSLVRIVNGAIRKGDKMRVMSTGRAYEVDQVGIFTPKRTKLDALYAGEVGYVVAGIKEIQGAPVGDTLTLDRNPADKVLPGFQRVKPQVYAGLFPVSSDDFEAFREALAKLSLNDASLFYEPESSEALGFGFRCGFLGMLHMEIIQERLEREYNLDLISTAPTVVYQIVTQKGETLLIDNPSHLPPTPQIKEMYEPIVRANILVPQDYLGPIITLCVERRGVQVSMTYSGRHVSVVYDIPMSEVVSDFFDRLKSVSRGYASLDYNFQRFQIADLVKMDILINSERVDALAVIVHRDSAHSRGKLIAEKMQQLIPRQMFDVAIQAAIGSHIIARQTVKALRKNVTAKCYGGDVTRKRKLLEKQKAGKKRMKQVGHVEIPQEAFMAVFQTDKKK.

Residues 14 to 196 enclose the tr-type G domain; the sequence is NRIRNFSIIA…ALVANIPPPK (183 aa). Residues 26–31 and 143–146 each bind GTP; these read DHGKST and NKID.

It belongs to the TRAFAC class translation factor GTPase superfamily. Classic translation factor GTPase family. LepA subfamily.

The protein localises to the cell inner membrane. It catalyses the reaction GTP + H2O = GDP + phosphate + H(+). Functionally, required for accurate and efficient protein synthesis under certain stress conditions. May act as a fidelity factor of the translation reaction, by catalyzing a one-codon backward translocation of tRNAs on improperly translocated ribosomes. Back-translocation proceeds from a post-translocation (POST) complex to a pre-translocation (PRE) complex, thus giving elongation factor G a second chance to translocate the tRNAs correctly. Binds to ribosomes in a GTP-dependent manner. The chain is Elongation factor 4 from Legionella pneumophila (strain Paris).